The primary structure comprises 154 residues: Probable prefoldin subunit 5 (154 aa).

Belongs to the prefoldin subunit alpha family. In terms of assembly, heterohexamer of two PFD-alpha type and four PFD-beta type subunits.

Binds specifically to cytosolic chaperonin (c-CPN) and transfers target proteins to it. Binds to nascent polypeptide chain and promotes folding in an environment in which there are many competing pathways for nonnative proteins. In Caenorhabditis briggsae, this protein is Probable prefoldin subunit 5.